Reading from the N-terminus, the 178-residue chain is Fatty-acid and retinol-binding protein 1 (178 aa).

The first 16 residues, 1–16 (MYHRLILLALVGTTMA), serve as a signal peptide directing secretion. 2 coiled-coil regions span residues 67–89 (DAAL…ELRN) and 130–153 (KQAA…ELKV).

It belongs to the fatty-acid and retinol-binding protein (FARBP) family. Post-translationally, not glycosylated.

The protein resides in the secreted. Its function is as follows. Binds retinol and different fatty acids. In Brugia pahangi (Filarial nematode worm), this protein is Fatty-acid and retinol-binding protein 1.